The chain runs to 394 residues: Endothelial cell-selective adhesion molecule (394 aa).

Residues 1–29 form the signal peptide; that stretch reads MILPARTPETSLLRVLFLGLSTLAAFSLA. Residues 30–251 are Extracellular-facing; sequence QMELHVPPGL…LDVMTGSKAA (222 aa). Residues 37–146 form the Ig-like V-type domain; that stretch reads PGLNKLEAVE…DGKNIGHSIK (110 aa). N-linked (GlcNAc...) asparagine glycosylation is found at Asn-111, Asn-172, Asn-216, and Asn-239. In terms of domain architecture, Ig-like C2-type spans 156-243; the sequence is PAPPSCSFQG…GFAQCNVTLD (88 aa). Cys-177 and Cys-227 are disulfide-bonded. The chain crosses the membrane as a helical span at residues 252–272; the sequence is VVAGAVVGTFVGLVLIAGLVL. Residues 273 to 394 lie on the Cytoplasmic side of the membrane; sequence LYQRRSKTLE…PAQSQAGSLV (122 aa). The tract at residues 300–372 is disordered; the sequence is WTKGSDTISK…SLTPGGVSSS (73 aa). Polar residues-rich tracts occupy residues 303–318 and 335–347; these read GSDT…SVTS and FTPT…QALS. Ser-304 bears the Phosphoserine mark. Phosphothreonine is present on residues Thr-336 and Thr-338. Phosphoserine is present on residues Ser-340, Ser-343, and Ser-348.

As to quaternary structure, interacts with MAGI1.

The protein resides in the cell junction. Its subcellular location is the adherens junction. The protein localises to the tight junction. It is found in the cell membrane. In terms of biological role, can mediate aggregation most likely through a homophilic molecular interaction. The polypeptide is Endothelial cell-selective adhesion molecule (Esam) (Rattus norvegicus (Rat)).